The sequence spans 171 residues: Neudesin (171 aa).

Residues 1–30 form the signal peptide; that stretch reads MARPAPWWRLRLLAALVLALALVPVPSAWA. One can recognise a Cytochrome b5 heme-binding domain in the interval 43-128; it reads VRLFTEEELA…KELEALDDVF (86 aa). The residue at position 135 (lysine 135) is an N6-acetyllysine.

Belongs to the cytochrome b5 family. MAPR subfamily. Interacts with PINK1 and PARK7. In terms of tissue distribution, in the embryo, expressed most abundantly in brain and spinal cord. Widely expressed in adult tissues including brain, heart, lung and kidney. In brain, expressed in neurons but not in glial cells. In the hypothalamus is expressed primarily in the paraventricular nucleus (PVN), with lower levels of expression in the arcuate nucleus (ARC).

The protein localises to the secreted. It localises to the extracellular space. The protein resides in the mitochondrion. It is found in the endoplasmic reticulum. Its function is as follows. Acts as a neurotrophic factor in postnatal mature neurons, enhancing neuronal survival. Promotes cell proliferation and neurogenesis in undifferentiated neural pro-genitor cells at the embryonic stage and inhibits differentiation of astrocytes. Its neurotrophic activity is exerted via MAPK1/ERK2, MAPK3/ERK1 and AKT1/AKT pathways. Neurotrophic activity is enhanced by binding to heme. Also acts as an anorexigenic neurotrophic factor that contributes to energy balance. The protein is Neudesin of Mus musculus (Mouse).